The sequence spans 159 residues: Putative ribosomal RNA large subunit methyltransferase H (159 aa).

Residues Leu-76, Gly-108, and 127 to 132 (FSKMTF) each bind S-adenosyl-L-methionine.

The protein belongs to the RNA methyltransferase RlmH family.

Its subcellular location is the cytoplasm. It catalyses the reaction pseudouridine(1915) in 23S rRNA + S-adenosyl-L-methionine = N(3)-methylpseudouridine(1915) in 23S rRNA + S-adenosyl-L-homocysteine + H(+). Functionally, specifically methylates the pseudouridine at position 1915 (m3Psi1915) in 23S rRNA. This is Putative ribosomal RNA large subunit methyltransferase H from Methanococcus maripaludis (strain DSM 14266 / JCM 13030 / NBRC 101832 / S2 / LL).